We begin with the raw amino-acid sequence, 71 residues long: Large ribosomal subunit protein uL29 (71 aa).

This sequence belongs to the universal ribosomal protein uL29 family.

This Rickettsia typhi (strain ATCC VR-144 / Wilmington) protein is Large ribosomal subunit protein uL29.